Reading from the N-terminus, the 654-residue chain is Threonine--tRNA ligase (654 aa).

The region spanning 1–63 (MASINVKFPD…TTDGSIEIIA (63 aa)) is the TGS domain. The tract at residues 248–546 (DHRVIGNELD…LTEIYKGAFP (299 aa)) is catalytic. Residues Cys342, His393, and His523 each coordinate Zn(2+).

It belongs to the class-II aminoacyl-tRNA synthetase family. Homodimer. Requires Zn(2+) as cofactor.

The protein resides in the cytoplasm. It catalyses the reaction tRNA(Thr) + L-threonine + ATP = L-threonyl-tRNA(Thr) + AMP + diphosphate + H(+). Catalyzes the attachment of threonine to tRNA(Thr) in a two-step reaction: L-threonine is first activated by ATP to form Thr-AMP and then transferred to the acceptor end of tRNA(Thr). Also edits incorrectly charged L-seryl-tRNA(Thr). The chain is Threonine--tRNA ligase from Lactiplantibacillus plantarum (strain ATCC BAA-793 / NCIMB 8826 / WCFS1) (Lactobacillus plantarum).